Consider the following 52-residue polypeptide: Large ribosomal subunit protein bL33 (52 aa).

This sequence belongs to the bacterial ribosomal protein bL33 family.

In Chlamydia trachomatis serovar L2 (strain ATCC VR-902B / DSM 19102 / 434/Bu), this protein is Large ribosomal subunit protein bL33.